The sequence spans 322 residues: Ribonucleoside-diphosphate reductase small subunit (322 aa).

Residues Asp-70, Glu-101, and His-104 each contribute to the Fe cation site. Residue Tyr-108 is part of the active site. Positions 163, 197, and 200 each coordinate Fe cation.

Belongs to the ribonucleoside diphosphate reductase small chain family. In terms of assembly, heterodimer of a large and a small subunit. It depends on Fe cation as a cofactor.

It catalyses the reaction a 2'-deoxyribonucleoside 5'-diphosphate + [thioredoxin]-disulfide + H2O = a ribonucleoside 5'-diphosphate + [thioredoxin]-dithiol. Its function is as follows. Provides the precursors necessary for DNA synthesis. Catalyzes the biosynthesis of deoxyribonucleotides from the corresponding ribonucleotides. The sequence is that of Ribonucleoside-diphosphate reductase small subunit (RNR2) from Plasmodium falciparum (isolate FCR-3 / Gambia).